The primary structure comprises 126 residues: Protein ApaG (126 aa).

The ApaG domain maps to 2-126 (SALDTSIRVE…FRLATPGLLH (125 aa)).

The chain is Protein ApaG from Shewanella sp. (strain W3-18-1).